The chain runs to 205 residues: Ribonuclease HII (205 aa).

An RNase H type-2 domain is found at 13-205 (TIVAGVDEVG…APVKYMLSMC (193 aa)). Residues D19, E20, and D114 each contribute to the a divalent metal cation site.

It belongs to the RNase HII family. The cofactor is Mn(2+). Mg(2+) serves as cofactor.

Its subcellular location is the cytoplasm. It carries out the reaction Endonucleolytic cleavage to 5'-phosphomonoester.. Its function is as follows. Endonuclease that specifically degrades the RNA of RNA-DNA hybrids. This chain is Ribonuclease HII, found in Blochmanniella floridana.